The sequence spans 188 residues: Type II secretion system protein H (188 aa).

A propeptide spans 1-10 (MKRSTRKQQG) (leader sequence). N-methylphenylalanine is present on F11. The chain crosses the membrane as a helical span at residues 13–35 (LLEMMLVVLLAGIAAGMVVMAFP).

It belongs to the GSP H family. In terms of assembly, type II secretion is composed of four main components: the outer membrane complex, the inner membrane complex, the cytoplasmic secretion ATPase and the periplasm-spanning pseudopilus. Interacts with core component OutG. Cleaved by prepilin peptidase. In terms of processing, methylated by prepilin peptidase at the amino group of the N-terminal phenylalanine once the leader sequence is cleaved by prepilin peptidase.

It localises to the cell inner membrane. Its function is as follows. Component of the type II secretion system required for the energy-dependent secretion of extracellular factors such as proteases and toxins from the periplasm. Part of the pseudopilus tip complex that is critical for the recognition and binding of secretion substrates. This chain is Type II secretion system protein H (outH), found in Pectobacterium carotovorum subsp. carotovorum (Erwinia carotovora subsp. carotovora).